The chain runs to 554 residues: Serine/threonine-protein phosphatase 2B catalytic subunit (554 aa).

Fe cation is bound by residues aspartate 119, histidine 121, and aspartate 147. Positions 147 and 179 each coordinate Zn(2+). Histidine 180 (proton donor) is an active-site residue. Zn(2+) is bound by residues histidine 228 and histidine 310. The disordered stretch occupies residues 411–433 (LKESAPTQHKQPAPSENENKADQ). Polar residues predominate over residues 415-426 (APTQHKQPAPSE).

Belongs to the PPP phosphatase family. PP-2B subfamily. As to quaternary structure, composed of two components (A and B), the A component is the catalytic subunit and the B component confers calcium sensitivity. The cofactor is Fe(3+). Zn(2+) is required as a cofactor.

The catalysed reaction is O-phospho-L-seryl-[protein] + H2O = L-seryl-[protein] + phosphate. The enzyme catalyses O-phospho-L-threonyl-[protein] + H2O = L-threonyl-[protein] + phosphate. Functionally, calcium-dependent, calmodulin-stimulated protein phosphatase. This subunit may have a role in the calmodulin activation of calcineurin. Appears to be involved in cytokinesis, mating, transport, nuclear and spindle pole body positioning, and cell shape. The chain is Serine/threonine-protein phosphatase 2B catalytic subunit (ppb1) from Schizosaccharomyces pombe (strain 972 / ATCC 24843) (Fission yeast).